A 567-amino-acid polypeptide reads, in one-letter code: TPR repeat-containing protein MJ1428 (567 aa).

TPR repeat units lie at residues 14 to 47 (YEDW…KNTN), 48 to 81 (PIDW…SPSN), 83 to 115 (YFAY…IKNE), 116 to 148 (ELFE…ANSK), 150 to 183 (LNAL…NPSH), 199 to 234 (INSY…DENS), 236 to 268 (ISYY…FNRS), 269 to 301 (LYYA…NSQN), 303 to 335 (YAYF…YLEE), 344 to 379 (LNLY…ENSS), 380 to 412 (RWWY…NPKD), 414 to 446 (STLK…VNSL), and 505 to 538 (AYIY…EMYR).

The protein is TPR repeat-containing protein MJ1428 of Methanocaldococcus jannaschii (strain ATCC 43067 / DSM 2661 / JAL-1 / JCM 10045 / NBRC 100440) (Methanococcus jannaschii).